The sequence spans 441 residues: Cysteine--tRNA ligase (441 aa).

Cys-24 contacts Zn(2+). Residues 26–36 carry the 'HIGH' region motif; it reads PTIYDYIHIGN. Residues Cys-204, His-230, and Glu-234 each coordinate Zn(2+). The 'KMSKS' region signature appears at 262–266; sequence KMSKS. Lys-265 serves as a coordination point for ATP.

Belongs to the class-I aminoacyl-tRNA synthetase family. As to quaternary structure, monomer. Zn(2+) serves as cofactor.

The protein resides in the cytoplasm. The enzyme catalyses tRNA(Cys) + L-cysteine + ATP = L-cysteinyl-tRNA(Cys) + AMP + diphosphate. The polypeptide is Cysteine--tRNA ligase (Mesoplasma florum (strain ATCC 33453 / NBRC 100688 / NCTC 11704 / L1) (Acholeplasma florum)).